The sequence spans 189 residues: uncharacterized protein (189 aa).

A run of 5 helical transmembrane segments spans residues 4–21 (AISTVLYVLIPFLVFLFR), 34–56 (AFYPFHLFLPMIVVFITGIPLIL), 79–101 (LLVIDTMLFQIMLLQPFITLIYS), 122–144 (RILSSLFAFVIAGIALPEIVLLN), and 148–170 (ILHVDYLFFVHLIASSVFANLLV).

It localises to the cell membrane. This is an uncharacterized protein from Archaeoglobus fulgidus (strain ATCC 49558 / DSM 4304 / JCM 9628 / NBRC 100126 / VC-16).